A 330-amino-acid polypeptide reads, in one-letter code: Aspartate--ammonia ligase (330 aa).

The protein belongs to the class-II aminoacyl-tRNA synthetase family. AsnA subfamily.

The protein resides in the cytoplasm. The enzyme catalyses L-aspartate + NH4(+) + ATP = L-asparagine + AMP + diphosphate + H(+). Its pathway is amino-acid biosynthesis; L-asparagine biosynthesis; L-asparagine from L-aspartate (ammonia route): step 1/1. This is Aspartate--ammonia ligase from Histophilus somni (strain 2336) (Haemophilus somnus).